Reading from the N-terminus, the 738-residue chain is Polyphosphate kinase (738 aa).

Residues methionine 1 to leucine 48 form a disordered region. The span at alanine 19–aspartate 30 shows a compositional bias: basic and acidic residues. An ATP-binding site is contributed by asparagine 91. Mg(2+) contacts are provided by arginine 427 and arginine 457. Histidine 487 (phosphohistidine intermediate) is an active-site residue. Residues tyrosine 520, arginine 620, and histidine 648 each coordinate ATP.

Belongs to the polyphosphate kinase 1 (PPK1) family. Mg(2+) is required as a cofactor. An intermediate of this reaction is the autophosphorylated ppk in which a phosphate is covalently linked to a histidine residue through a N-P bond.

It catalyses the reaction [phosphate](n) + ATP = [phosphate](n+1) + ADP. Catalyzes the reversible transfer of the terminal phosphate of ATP to form a long-chain polyphosphate (polyP). This is Polyphosphate kinase from Mycobacterium ulcerans (strain Agy99).